The primary structure comprises 494 residues: Nuclear distribution protein PAC1 (494 aa).

Residues 14 to 46 enclose the LisH domain; sequence QKNELDKSVLRYLNWNYKQTVRHEHAQDYESVR. A coiled-coil region spans residues 90–123; the sequence is NSIVRLQKKIIELEQNTETLVSQIKDLNTQVSEL. WD repeat units lie at residues 153–192, 196–244, 251–292, 295–334, 347–395, 415–454, and 457–492; these read NVES…IPLA, SHTK…CKFQ, GHEH…SLKT, PHSQ…SVGT, HFIE…LMAH, GHLS…HVWE, and HTGF…SNVF.

The protein belongs to the WD repeat LIS1/nudF family. Self-associates. Interacts with NDL1 and dynein.

The protein localises to the cytoplasm. It is found in the cytoskeleton. It localises to the spindle pole. Positively regulates the activity of the minus-end directed microtubule motor protein dynein. Plays a central role in positioning the mitotic spindle at the bud neck during cell division. Targets cytoplasmic dynein to microtubule plus ends, thereby promoting dynein-mediated microtubule sliding along the bud cortex and consequently the movement of the mitotic spindle to the bud neck. The polypeptide is Nuclear distribution protein PAC1 (Saccharomyces cerevisiae (strain JAY291) (Baker's yeast)).